The chain runs to 168 residues: Protein GrpE (168 aa).

It belongs to the GrpE family. Homodimer.

The protein resides in the cytoplasm. In terms of biological role, participates actively in the response to hyperosmotic and heat shock by preventing the aggregation of stress-denatured proteins, in association with DnaK and GrpE. It is the nucleotide exchange factor for DnaK and may function as a thermosensor. Unfolded proteins bind initially to DnaJ; upon interaction with the DnaJ-bound protein, DnaK hydrolyzes its bound ATP, resulting in the formation of a stable complex. GrpE releases ADP from DnaK; ATP binding to DnaK triggers the release of the substrate protein, thus completing the reaction cycle. Several rounds of ATP-dependent interactions between DnaJ, DnaK and GrpE are required for fully efficient folding. This is Protein GrpE from Thermotoga neapolitana (strain ATCC 49049 / DSM 4359 / NBRC 107923 / NS-E).